The sequence spans 285 residues: MAEVEHQDTVNHRVLVSLKEAARIIGAQGMTIQKIRESSKVKIGISPHERGCSDRILSCSGSAQGVANAIGDVVEVLNQDDSEPETHSYKPLNFILPAPSATEIQDPESVKRIGNLRLIVSNSQVSSIIGTQGSRIKSLIEKHGVKVVASKNFLPDSQDRVVEIQGFPGAIASCLVDISEILAAEPKPSHEKQYYPHTKSQEEGSVTKDVAIPVEYVGALLGRGGNRVSSLRKYTKTKVIVSDEPDEENNRVFTITGNNQNSVKLAETMLLKNLETEKQRREDKV.

KH domains follow at residues 9–73, 113–178, and 205–270; these read TVNH…IGDV, IGNL…LVDI, and SVTK…ETML.

The protein belongs to the HEK2 family. As to quaternary structure, binds RNA.

It localises to the cytoplasm. Its subcellular location is the P-body. The protein localises to the nucleus. The protein resides in the chromosome. It is found in the telomere. Functionally, RNA-binding protein involved in the correct localization of transcripts in the cell. RNA localization is a widespread mechanism for achieving localized protein synthesis. Involved in structural and functional organization of telomeric chromatin and regulates silencing at the HMR locus. The polypeptide is Heterogeneous nuclear rnp K-like protein 2 (HEK2) (Lachancea thermotolerans (strain ATCC 56472 / CBS 6340 / NRRL Y-8284) (Yeast)).